The following is a 113-amino-acid chain: Small ribosomal subunit protein uS17 (113 aa).

The protein belongs to the universal ribosomal protein uS17 family. Part of the 30S ribosomal subunit.

Its function is as follows. One of the primary rRNA binding proteins, it binds specifically to the 5'-end of 16S ribosomal RNA. This Pyrococcus furiosus (strain ATCC 43587 / DSM 3638 / JCM 8422 / Vc1) protein is Small ribosomal subunit protein uS17.